The primary structure comprises 896 residues: Zinc finger protein 574 (896 aa).

3 C2H2-type zinc fingers span residues 16 to 38 (YVCS…QNSH), 76 to 98 (YQCL…QELH), and 126 to 148 (YECV…RQTH). Residue serine 164 is modified to Phosphoserine. The C2H2-type 4 zinc finger occupies 214 to 236 (YKCSECSQLFQLPADFLEHQATH). Positions 259–272 (VEVPVSQPEPVPSS) are enriched in low complexity. Residues 259–303 (VEVPVSQPEPVPSSDHSYELRNGEALGRDRRGRRARRNNSGEPGG) are disordered. A compositionally biased stretch (basic and acidic residues) spans 274–287 (HSYELRNGEALGRD). A Phosphoserine modification is found at serine 298. C2H2-type zinc fingers lie at residues 309–331 (LFCS…LRSH), 336–358 (FKCP…LGDH), 364–386 (FLCV…RRAH), and 392–413 (HSCP…RRTH). Positions 434–460 (FPEPAPAETGEPEAPEPPVAEESSAEP) are disordered. 6 consecutive C2H2-type zinc fingers follow at residues 466–489 (YRCL…RFVH), 495–517 (HKCS…LRTH), 523–545 (FPCP…RLTH), 551–573 (YRCG…RLVH), 579–601 (YRCQ…RYHH), and 607–630 (YKCR…LVAH). The segment at 636–659 (HRCSSCGAAFPSSLRLREHRCAAA) adopts a C2H2-type 15; degenerate zinc-finger fold. The segment at 667 to 689 (FECGTCGKKVGSAARLQAHEAAH) adopts a C2H2-type 16 zinc-finger fold. The segment at 687 to 733 (AAHAAAGPGEVLAKEPPAPRAPRAARTPITSPTTLGSAAPAAPAAPA) is disordered. Positions 707–732 (APRAARTPITSPTTLGSAAPAAPAAP) are enriched in low complexity. Serine 717 is subject to Phosphoserine. 4 consecutive C2H2-type zinc fingers follow at residues 738-760 (LECS…RRIH), 766-788 (YPCP…RRLH), 794-816 (FACE…RRIH), and 822-844 (YSCP…RKTH). Arginine 832 is subject to Asymmetric dimethylarginine.

The protein belongs to the krueppel C2H2-type zinc-finger protein family.

The protein localises to the nucleus. Its function is as follows. May be involved in transcriptional regulation. The chain is Zinc finger protein 574 (ZNF574) from Bos taurus (Bovine).